The sequence spans 310 residues: Porphobilinogen deaminase (310 aa).

Position 242 is an S-(dipyrrolylmethanemethyl)cysteine (cysteine 242).

The protein belongs to the HMBS family. In terms of assembly, monomer. The cofactor is dipyrromethane.

The catalysed reaction is 4 porphobilinogen + H2O = hydroxymethylbilane + 4 NH4(+). Its pathway is porphyrin-containing compound metabolism; protoporphyrin-IX biosynthesis; coproporphyrinogen-III from 5-aminolevulinate: step 2/4. In terms of biological role, tetrapolymerization of the monopyrrole PBG into the hydroxymethylbilane pre-uroporphyrinogen in several discrete steps. The sequence is that of Porphobilinogen deaminase from Shewanella baltica (strain OS195).